Reading from the N-terminus, the 303-residue chain is Ribosomal RNA small subunit methyltransferase H (303 aa).

S-adenosyl-L-methionine is bound by residues 33 to 35, Asp-52, Phe-78, Asp-99, and Gln-106; that span reads GGH.

It belongs to the methyltransferase superfamily. RsmH family.

It is found in the cytoplasm. The catalysed reaction is cytidine(1402) in 16S rRNA + S-adenosyl-L-methionine = N(4)-methylcytidine(1402) in 16S rRNA + S-adenosyl-L-homocysteine + H(+). In terms of biological role, specifically methylates the N4 position of cytidine in position 1402 (C1402) of 16S rRNA. The chain is Ribosomal RNA small subunit methyltransferase H from Phytoplasma australiense.